The following is a 517-amino-acid chain: MIVKFHARGKGGGSGPVDYLLGRERNREGATVLQGNPEEVRELIDATPFAKKYTSGVLSFAEKELPPGGREKVMASFERVLMPGLEKNQYSILWVEHQDKGRLELNFVIPNMELQTGKRLQPYYDRADRPRIDAWQTLVNHHYGLHDPNAPENRRTLTLPDNLPETKQALAEGVTRGIDALYHAGEIKGRQDVIQALTEAGLEVVRVTRTSISIADPNGGKNIRLKGAFYEQSFADGRGVREKAERESRIYRENAEQRVQEARRICKRGCDIKRDENQRRYSPVHSLDRGIAGKTPGRGERGDDAAQEGRVKAGREYGHDVTGDSLSPVYREWRDALVSWREDTGEPGRNQEAGRDIAETEREDMGRGVCAGREQEIPCPSVREISGGDSLSGERVGTSEGVTQSDRAGNTFAERLRAAATGLYAAAERMGERLRGIAEDVFAYATGQRDAERAGHAVESAGAALERADRTLEPVIQRELEIREERLIQEREHVLSLERERQPEIQERTLDGPSLGW.

Tyr-19 acts as the O-(5'-phospho-DNA)-tyrosine intermediate in catalysis. A divalent metal cation-binding residues include His-97, Glu-104, and Asn-106. Disordered regions lie at residues Tyr-281–Arg-310, Pro-380–Ser-405, and Ser-496–Trp-517. Basic and acidic residues predominate over residues Gly-297 to Arg-310. The segment covering Ser-496–Leu-510 has biased composition (basic and acidic residues).

The protein to E.coli MbaA and MbkA. Interacts with MbeB and MbeC to form the relaxosome. Mn(2+) serves as cofactor. Requires Co(2+) as cofactor. It depends on Ni(2+) as a cofactor.

The catalysed reaction is ATP-independent breakage of single-stranded DNA, followed by passage and rejoining.. Its function is as follows. Relaxase involved in plasmid ColE1 conjugative mobilization and is thus essential to promote the specific transfer of the plasmid during conjugation. First catalyzes the specific cleavage of one of the DNA strands at oriT, forming a covalent 5'-phosphotyrosine intermediate. The nic site corresponds to 5'-(1469)CTGG/CTTA(1462)-3' in the cleaved strand. The cleaved strand is then transferred through the dedicated type IV secretion apparatus. MbeA remains covalently linked at the 5' end of the strand, and once in the recipient cell, it probably catalyzes the rejoining of the two ends of the strand, re-forming the circular plasmid DNA. Is functional in vitro without a requirement for the conjugative accessory proteins. The chain is DNA relaxase MbeA (mbeA) from Escherichia coli.